The primary structure comprises 379 residues: Carbamoyl phosphate synthase small chain (379 aa).

The segment at methionine 1 to asparagine 184 is CPSase. The L-glutamine site is built by serine 44, glycine 240, and glycine 242. One can recognise a Glutamine amidotransferase type-1 domain in the interval threonine 188–arginine 378. Residue cysteine 268 is the Nucleophile of the active site. Residues leucine 269, glutamine 272, asparagine 310, and tyrosine 313 each contribute to the L-glutamine site. Active-site residues include histidine 351 and glutamate 353.

Belongs to the CarA family. In terms of assembly, composed of two chains; the small (or glutamine) chain promotes the hydrolysis of glutamine to ammonia, which is used by the large (or ammonia) chain to synthesize carbamoyl phosphate. Tetramer of heterodimers (alpha,beta)4.

The enzyme catalyses hydrogencarbonate + L-glutamine + 2 ATP + H2O = carbamoyl phosphate + L-glutamate + 2 ADP + phosphate + 2 H(+). The catalysed reaction is L-glutamine + H2O = L-glutamate + NH4(+). Its pathway is amino-acid biosynthesis; L-arginine biosynthesis; carbamoyl phosphate from bicarbonate: step 1/1. It participates in pyrimidine metabolism; UMP biosynthesis via de novo pathway; (S)-dihydroorotate from bicarbonate: step 1/3. Small subunit of the glutamine-dependent carbamoyl phosphate synthetase (CPSase). CPSase catalyzes the formation of carbamoyl phosphate from the ammonia moiety of glutamine, carbonate, and phosphate donated by ATP, constituting the first step of 2 biosynthetic pathways, one leading to arginine and/or urea and the other to pyrimidine nucleotides. The small subunit (glutamine amidotransferase) binds and cleaves glutamine to supply the large subunit with the substrate ammonia. The polypeptide is Carbamoyl phosphate synthase small chain (Helicobacter acinonychis (strain Sheeba)).